The following is a 407-amino-acid chain: MTQLINVNSRSYRLSSAPTIVICVDGCEQEYINQAIQAGQTPFLAELTGFGTVLTGDCVVPSFTNPNNLSIVTGAPPSVHGICGNFFFDQETQEEVLMNDAKYLRAPTILAEMAKAGQLVAVVTAKDKLRNLLGHQLKGICFSAEKADQVNLEEHGVENILARVGMPVPSVYSADLSEFVFAAGLSLLTNERPDFMYLSTTDYVQHKHAPGTPEANAFYAMMDSYFKRYHEEGAIVAITADHGMNAKTDAIGRPNILFLQDLLDAQYGARRTRVLLPITDPYVVHHGALGSYATVYLRDAVPQRDAIDFLAGIAGVEAVLTRSQACQRFELPEDRIGDLVVLGERLTVLGSAADKHDLSGLTVPLRSHGGVSEQKVPLIFNRKLVGLDSFDRLRNFDIIDLALNHLA.

Residues Asp-25, Thr-64, Asp-202, His-206, Asp-241, His-242, and His-368 each coordinate Zn(2+). Residues Thr-64 and Asp-202 each contribute to the substrate site. His-242 and His-368 together coordinate substrate.

Belongs to the alkaline phosphatase family. PhnA subfamily. As to quaternary structure, homodimer. Zn(2+) is required as a cofactor.

The enzyme catalyses phosphonoacetate + H2O = acetate + phosphate + H(+). Functionally, specifically hydrolyzes phosphonoacetate. Does not have activity on other organophosphonates or acetates. The sequence is that of Phosphonoacetate hydrolase from Pseudomonas cedrina.